Here is a 421-residue protein sequence, read N- to C-terminus: Putative aspartate aminotransferase, cytoplasmic 2 (421 aa).

Position 249 is an N6-(pyridoxal phosphate)lysine (Lys249).

This sequence belongs to the class-I pyridoxal-phosphate-dependent aminotransferase family. In terms of assembly, homodimer. Requires pyridoxal 5'-phosphate as cofactor.

Its subcellular location is the cytoplasm. The catalysed reaction is L-aspartate + 2-oxoglutarate = oxaloacetate + L-glutamate. The protein is Putative aspartate aminotransferase, cytoplasmic 2 (GOT1L1) of Homo sapiens (Human).